Consider the following 201-residue polypeptide: Peptidyl-tRNA hydrolase (201 aa).

Tyr14 is a binding site for tRNA. The Proton acceptor role is filled by His19. TRNA is bound by residues Tyr64, Asn66, and Asn112.

This sequence belongs to the PTH family. In terms of assembly, monomer.

The protein localises to the cytoplasm. The enzyme catalyses an N-acyl-L-alpha-aminoacyl-tRNA + H2O = an N-acyl-L-amino acid + a tRNA + H(+). In terms of biological role, hydrolyzes ribosome-free peptidyl-tRNAs (with 1 or more amino acids incorporated), which drop off the ribosome during protein synthesis, or as a result of ribosome stalling. Its function is as follows. Catalyzes the release of premature peptidyl moieties from peptidyl-tRNA molecules trapped in stalled 50S ribosomal subunits, and thus maintains levels of free tRNAs and 50S ribosomes. This is Peptidyl-tRNA hydrolase from Rhodopseudomonas palustris (strain BisB18).